The following is a 428-amino-acid chain: Glutamyl-tRNA reductase (428 aa).

Substrate-binding positions include 49-52, Ser-109, 114-116, and Gln-120; these read TCNR and EGQ. The active-site Nucleophile is Cys-50. Position 189–194 (189–194) interacts with NADP(+); it reads GAGKMS.

Belongs to the glutamyl-tRNA reductase family. As to quaternary structure, homodimer.

The catalysed reaction is (S)-4-amino-5-oxopentanoate + tRNA(Glu) + NADP(+) = L-glutamyl-tRNA(Glu) + NADPH + H(+). The protein operates within porphyrin-containing compound metabolism; protoporphyrin-IX biosynthesis; 5-aminolevulinate from L-glutamyl-tRNA(Glu): step 1/2. It participates in porphyrin-containing compound metabolism; chlorophyll biosynthesis. Catalyzes the NADPH-dependent reduction of glutamyl-tRNA(Glu) to glutamate 1-semialdehyde (GSA). This chain is Glutamyl-tRNA reductase, found in Microcystis aeruginosa (strain NIES-843 / IAM M-2473).